A 570-amino-acid polypeptide reads, in one-letter code: MTKATKEQKSLVKNRGAELVVDCLVEQGVTHVFGIPGAKIDAVFDALQDKGPEIIVARHEQNAAFMAQAVGRLTGKPGVVLVTSGPGASNLATGLLTANTEGDPVVALAGNVIRADRLKRTHQSLDNAALFQPITKYSVEVQDVKNIPEAVTNAFRIASAGQAGAAFVSFPQDVVNEVTNTKNVRAVAAPKLGPAADDAISAAIAKIQTAKLPVVLVGMKGGRPEAIKAVRKLLKKVQLPFVETYQAAGTLSRDLEDQYFGRIGLFRNQPGDLLLEQADVVLTIGYDPIEYDPKFWNINGDRTIIHLDEIIADIDHAYQPDLELIGDIPSTINHIEHDAVKVEFAEREQKILSDLKQYMHEGEQVPADWKSDRAHPLEIVKELRNAVDDHVTVTCDIGSHAIWMSRYFRSYEPLTLMISNGMQTLGVALPWAIGASLVKPGEKVVSVSGDGGFLFSAMELETAVRLKAPIVHIVWNDSTYDMVAFQQLKKYNRTSAVDFGNIDIVKYAESFGATGLRVESPDQLADVLRQGMNAEGPVIIDVPVDYSDNINLASDKLPKEFGELMKTKAL.

Residue glutamate 60 coordinates thiamine diphosphate. FAD is bound by residues glutamine 162, 266-287 (FRNQPGDLLLEQADVVLTIGYD), and 308-327 (DEIIADIDHAYQPDLELIGD). The tract at residues 399–479 (SHAIWMSRYF…IVHIVWNDST (81 aa)) is thiamine pyrophosphate binding. Aspartate 450 is a binding site for Mg(2+).

It belongs to the TPP enzyme family. Requires Mg(2+) as cofactor. The cofactor is thiamine diphosphate.

The catalysed reaction is 2 pyruvate + H(+) = (2S)-2-acetolactate + CO2. Its pathway is polyol metabolism; (R,R)-butane-2,3-diol biosynthesis; (R,R)-butane-2,3-diol from pyruvate: step 1/3. The sequence is that of Acetolactate synthase (alsS) from Bacillus subtilis (strain 168).